The sequence spans 78 residues: D-alanyl carrier protein (78 aa).

The 78-residue stretch at M1–Q78 folds into the Carrier domain. S36 bears the O-(pantetheine 4'-phosphoryl)serine mark.

This sequence belongs to the DltC family. 4'-phosphopantetheine is transferred from CoA to a specific serine of apo-DCP.

It localises to the cytoplasm. The protein operates within cell wall biogenesis; lipoteichoic acid biosynthesis. Carrier protein involved in the D-alanylation of lipoteichoic acid (LTA). The loading of thioester-linked D-alanine onto DltC is catalyzed by D-alanine--D-alanyl carrier protein ligase DltA. The DltC-carried D-alanyl group is further transferred to cell membrane phosphatidylglycerol (PG) by forming an ester bond, probably catalyzed by DltD. D-alanylation of LTA plays an important role in modulating the properties of the cell wall in Gram-positive bacteria, influencing the net charge of the cell wall. This is D-alanyl carrier protein from Enterococcus faecalis (strain ATCC 700802 / V583).